Consider the following 437-residue polypeptide: Trigger factor (437 aa).

Residues 163-248 (DDRVTVDFEG…VKKIEASHLP (86 aa)) enclose the PPIase FKBP-type domain.

It belongs to the FKBP-type PPIase family. Tig subfamily.

Its subcellular location is the cytoplasm. The catalysed reaction is [protein]-peptidylproline (omega=180) = [protein]-peptidylproline (omega=0). In terms of biological role, involved in protein export. Acts as a chaperone by maintaining the newly synthesized protein in an open conformation. Functions as a peptidyl-prolyl cis-trans isomerase. In Variovorax paradoxus (strain S110), this protein is Trigger factor.